The following is a 61-amino-acid chain: uncharacterized protein (61 aa).

Helical transmembrane passes span 5–25 (MLYF…SLLL) and 29–49 (YILT…PWYT).

It localises to the membrane. This is an uncharacterized protein from Saccharomyces cerevisiae (strain ATCC 204508 / S288c) (Baker's yeast).